A 784-amino-acid polypeptide reads, in one-letter code: Melanoma-associated antigen D1 (784 aa).

Residues 41 to 67 (PTNQATAAASGPNASPQSSQPPSANEV) are disordered. Residues 47-65 (AAASGPNASPQSSQPPSAN) show a composition bias toward low complexity. Tyr-97 is modified (phosphotyrosine). Polar residues-rich tracts occupy residues 195 to 214 (PTAETQTQNINQAKMATSQA), 232 to 246 (AQTSADGSQAQNLES), 259 to 269 (NNLNVEESSSG), and 306 to 320 (LAWQNPSGWQNQPAR). The interval 195-339 (PTAETQTQNI…PARQTPPAWQ (145 aa)) is disordered. 19 repeat units span residues 302-307 (WQTPLA), 308-313 (WQNPSG), 314-319 (WQNQPA), 338-343 (WQNPVA), 344-349 (WQNPVI), 350-355 (WPNPVI), 356-361 (WQNPVI), 362-367 (WPNPIV), 368-373 (WPGPVV), 374-379 (WPNPLA), 380-385 (WQNPPG), 386-391 (WQTPPG), 392-397 (WQTPPG), 398-403 (WQGPPD), 404-409 (WQGPPD), 410-415 (WPLPPD), 416-421 (WPLPPD), 422-427 (WPLPTD), and 428-433 (WPLPPD). The 22 X 6 AA tandem repeats of W-[PQ]-X-P-X-X stretch occupies residues 302–450 (WQTPLAWQNP…VPPDWQNLRP (149 aa)). The tract at residues 379 to 418 (AWQNPPGWQTPPGWQTPPGWQGPPDWQGPPDWPLPPDWPL) is disordered. The span at 383–403 (PPGWQTPPGWQTPPGWQGPPD) shows a compositional bias: low complexity. Over residues 404 to 418 (WQGPPDWPLPPDWPL) the composition is skewed to pro residues. The 20; approximate repeat unit spans residues 434–438 (WIPTD). 2 tandem repeats follow at residues 439 to 444 (WPVPPD) and 445 to 450 (WQNLRP). The disordered stretch occupies residues 441-471 (VPPDWQNLRPSPNLRPSPNSRASQNLGASQP). The segment covering 447–461 (NLRPSPNLRPSPNSR) has biased composition (low complexity). One can recognise an MAGE domain in the interval 477–675 (LQERANKLVK…RDWTAQFMEA (199 aa)).

Interacts with DLX5, DLX7 and MSX2 and forms homomultimers. Interacts with UNC5A. Interacts with TRIM28 and PJA1. Interacts with NGFR/p75NTR and RORA.

Its subcellular location is the cytoplasm. The protein localises to the cell membrane. It is found in the nucleus. Functionally, involved in the apoptotic response after nerve growth factor (NGF) binding in neuronal cells. Inhibits cell cycle progression, and facilitates NGFR-mediated apoptosis. May act as a regulator of the function of DLX family members. May enhance ubiquitin ligase activity of RING-type zinc finger-containing E3 ubiquitin-protein ligases. Proposed to act through recruitment and/or stabilization of the Ubl-conjugating enzyme (E2) at the E3:substrate complex. Plays a role in the circadian rhythm regulation. May act as RORA co-regulator, modulating the expression of core clock genes such as BMAL1 and NFIL3, induced, or NR1D1, repressed. This is Melanoma-associated antigen D1 (MAGED1) from Sus scrofa (Pig).